The chain runs to 157 residues: Transmembrane protein 50A (157 aa).

An N-acetylserine modification is found at serine 2. Serine 2 is modified (phosphoserine). Helical transmembrane passes span 26–46, 58–78, 95–115, and 126–146; these read IAAGVLFFTGWWIIIDAAVIY, ACGVIATIAFLMINAVSNGQV, IWLFVGFMLAFGSLIASMWIL, and IVYPGIAVFFQNAFIFFGGLV.

This sequence belongs to the UPF0220 family.

Its subcellular location is the membrane. The sequence is that of Transmembrane protein 50A (TMEM50A) from Homo sapiens (Human).